The chain runs to 230 residues: Somatolactin (230 aa).

The first 23 residues, 1–23, serve as a signal peptide directing secretion; that stretch reads MIKTKVLQAWMGIWLCAVNGLLG. Cystine bridges form between C28-C38, C87-C202, and C219-C227. An N-linked (GlcNAc...) asparagine glycan is attached at N177.

This sequence belongs to the somatotropin/prolactin family.

It is found in the secreted. The sequence is that of Somatolactin from Ictalurus punctatus (Channel catfish).